The primary structure comprises 75 residues: Sec-independent protein translocase protein TatA (75 aa).

Residues 1 to 21 traverse the membrane as a helical segment; the sequence is MGISIWQLLIVLGIVILLFGT. Residues 41 to 75 form a disordered region; it reads SMSDEEEKNAEQQPLEKQNAEQQAQAEDKPKEKQG. The segment covering 56–65 has biased composition (low complexity); it reads EKQNAEQQAQ. Residues 66 to 75 are compositionally biased toward basic and acidic residues; it reads AEDKPKEKQG.

The protein belongs to the TatA/E family. In terms of assembly, the Tat system comprises two distinct complexes: a TatABC complex, containing multiple copies of TatA, TatB and TatC subunits, and a separate TatA complex, containing only TatA subunits. Substrates initially bind to the TatABC complex, which probably triggers association of the separate TatA complex to form the active translocon.

Its subcellular location is the cell inner membrane. In terms of biological role, part of the twin-arginine translocation (Tat) system that transports large folded proteins containing a characteristic twin-arginine motif in their signal peptide across membranes. TatA could form the protein-conducting channel of the Tat system. This Marinobacter nauticus (strain ATCC 700491 / DSM 11845 / VT8) (Marinobacter aquaeolei) protein is Sec-independent protein translocase protein TatA.